Here is a 793-residue protein sequence, read N- to C-terminus: Short transient receptor potential channel 1 (793 aa).

The segment at 1 to 30 (MMAALYPSTDLSGVSSSSLPSSPSSSSPNE) is disordered. Over 1–345 (MMAALYPSTD…FGQMSGYRRK (345 aa)) the chain is Cytoplasmic. A compositionally biased stretch (low complexity) spans 15-28 (SSSSLPSSPSSSSP). ANK repeat units lie at residues 46 to 75 (LNEK…SGDL), 83 to 109 (LGRN…YGCQ), 111 to 156 (ADAL…EYST), and 158 to 180 (MDVA…MLLK). Residues H189, C193, C195, and C198 each contribute to the Zn(2+) site. Positions 346-379 (PTCKKIMTVLTVGIFWPVLSLCYLIAPKSQFGRI) form an intramembrane region, discontinuously helical. Over 380 to 386 (IHTPFMK) the chain is Cytoplasmic. Residues 387–404 (FIIHGASYFTFLLLLNLY) traverse the membrane as a helical segment. Residues 405 to 422 (SLVYNEDKKNTMGPALER) lie on the Extracellular side of the membrane. A helical transmembrane segment spans residues 423-439 (IDYLLILWIIGMIWSDI). Residues 440 to 455 (KRLWYEGLEDFLEESR) lie on the Cytoplasmic side of the membrane. Residues 456 to 475 (NQLSFVMNSLYLATFALKVV) traverse the membrane as a helical segment. At 476–496 (AHNKFHDFADRKDWDAFHPTL) the chain is on the extracellular side. The helical transmembrane segment at 497 to 517 (VAEGLFAFANVLSYLRLFFMY) threads the bilayer. Residues 518–536 (TTSSILGPLQISMGQMLQD) lie on the Cytoplasmic side of the membrane. A helical transmembrane segment spans residues 537–558 (FGKFLGMFLLVLFSFTIGLTQL). Residues 559–623 (YDKGYTSKEQ…GEELQSFVGA (65 aa)) are Extracellular-facing. Cysteines 571 and 576 form a disulfide. Residues 624-644 (VIVGTYNVVVVIVLTKLLVAM) traverse the membrane as a helical segment. Residues 645–793 (LHKSFQLIAN…SKYAMFYPRN (149 aa)) are Cytoplasmic-facing.

This sequence belongs to the transient receptor (TC 1.A.4) family. STrpC subfamily. TRPC1 sub-subfamily. As to quaternary structure, heterotetramer with TRPC4 and/or TRPC5. Forms a heteromeric ion channel with TRPC4, with a 1:3 TRPC1:TRPC4 stoichiometry. Unlike other TRP channel proteins, does not form a homomeric channel. Interacts with TRPC4AP. Interacts with ITPR3. Interacts with MX1 and RNF24. Interacts with FKBP4. Interacts with PLSCR1. Interacts with PKD2L2. Forms a heterotetramer with PKD2 with a 2:2 stoichiometry; has distinct channel properties separate from PKD2 or TRPC1 homomers alone. Post-translationally, activation of PRKCA induces phosphorylation of TRPC1 and subsequent Ca2+ entry into cells.

The protein localises to the cell membrane. It carries out the reaction Ca(2+)(in) = Ca(2+)(out). It catalyses the reaction Na(+)(in) = Na(+)(out). The catalysed reaction is Li(+)(in) = Li(+)(out). The enzyme catalyses Cs(+)(in) = Cs(+)(out). Its activity is regulated as follows. May be operated by a phosphatidylinositol second messenger system activated by receptor tyrosine kinases or G-protein coupled receptors. Also activated by intracellular calcium store depletion. Functionally, forms a receptor-activated non-selective calcium permeant cation channel. Forms a heteromeric ion channel with TRPC4 or TRPC5 that has reduced calcium permeability compared to the homomeric TRPC4 or TRPC5 channel. Also permeable to monovalent ions including sodium, lithium and cesium ions. This chain is Short transient receptor potential channel 1 (Trpc1), found in Mus musculus (Mouse).